Reading from the N-terminus, the 188-residue chain is Probable nicotinate-nucleotide adenylyltransferase (188 aa).

The protein belongs to the NadD family.

The catalysed reaction is nicotinate beta-D-ribonucleotide + ATP + H(+) = deamido-NAD(+) + diphosphate. Its pathway is cofactor biosynthesis; NAD(+) biosynthesis; deamido-NAD(+) from nicotinate D-ribonucleotide: step 1/1. Catalyzes the reversible adenylation of nicotinate mononucleotide (NaMN) to nicotinic acid adenine dinucleotide (NaAD). The polypeptide is Probable nicotinate-nucleotide adenylyltransferase (Rhizobium meliloti (strain 1021) (Ensifer meliloti)).